The chain runs to 216 residues: Pyridoxine/pyridoxamine 5'-phosphate oxidase (216 aa).

Substrate-binding positions include 12-15 and Lys-70; that span reads RKSY. FMN is bound by residues 65-70, 80-81, Arg-86, and Lys-87; these read RVVLVK and FT. Residues Tyr-127, Arg-131, and Ser-135 each coordinate substrate. Residues 144-145 and Trp-188 contribute to the FMN site; that span reads QS. Residue 194 to 196 participates in substrate binding; sequence RLH. Arg-198 is a binding site for FMN.

This sequence belongs to the pyridoxamine 5'-phosphate oxidase family. In terms of assembly, homodimer. The cofactor is FMN.

The enzyme catalyses pyridoxamine 5'-phosphate + O2 + H2O = pyridoxal 5'-phosphate + H2O2 + NH4(+). The catalysed reaction is pyridoxine 5'-phosphate + O2 = pyridoxal 5'-phosphate + H2O2. It functions in the pathway cofactor metabolism; pyridoxal 5'-phosphate salvage; pyridoxal 5'-phosphate from pyridoxamine 5'-phosphate: step 1/1. The protein operates within cofactor metabolism; pyridoxal 5'-phosphate salvage; pyridoxal 5'-phosphate from pyridoxine 5'-phosphate: step 1/1. Its function is as follows. Catalyzes the oxidation of either pyridoxine 5'-phosphate (PNP) or pyridoxamine 5'-phosphate (PMP) into pyridoxal 5'-phosphate (PLP). The chain is Pyridoxine/pyridoxamine 5'-phosphate oxidase from Polaromonas sp. (strain JS666 / ATCC BAA-500).